A 95-amino-acid chain; its full sequence is Co-chaperonin GroES (95 aa).

The protein belongs to the GroES chaperonin family. Heptamer of 7 subunits arranged in a ring. Interacts with the chaperonin GroEL.

The protein resides in the cytoplasm. Its function is as follows. Together with the chaperonin GroEL, plays an essential role in assisting protein folding. The GroEL-GroES system forms a nano-cage that allows encapsulation of the non-native substrate proteins and provides a physical environment optimized to promote and accelerate protein folding. GroES binds to the apical surface of the GroEL ring, thereby capping the opening of the GroEL channel. The polypeptide is Co-chaperonin GroES (Staphylococcus haemolyticus (strain JCSC1435)).